A 485-amino-acid chain; its full sequence is Glutamyl-tRNA(Gln) amidotransferase subunit A (485 aa).

Catalysis depends on charge relay system residues Lys-78 and Ser-153. The active-site Acyl-ester intermediate is Ser-177.

The protein belongs to the amidase family. GatA subfamily. Heterotrimer of A, B and C subunits.

It catalyses the reaction L-glutamyl-tRNA(Gln) + L-glutamine + ATP + H2O = L-glutaminyl-tRNA(Gln) + L-glutamate + ADP + phosphate + H(+). Functionally, allows the formation of correctly charged Gln-tRNA(Gln) through the transamidation of misacylated Glu-tRNA(Gln) in organisms which lack glutaminyl-tRNA synthetase. The reaction takes place in the presence of glutamine and ATP through an activated gamma-phospho-Glu-tRNA(Gln). This chain is Glutamyl-tRNA(Gln) amidotransferase subunit A, found in Syntrophus aciditrophicus (strain SB).